A 61-amino-acid chain; its full sequence is Conotoxin Vn5.3 (61 aa).

The signal sequence occupies residues 1-19; that stretch reads MRCLPVFVILLLLIASAPG. Residues 20–50 constitute a propeptide that is removed on maturation; sequence VDVQPKTKYYVPRASRRDFAKKTPKRLSKLR.

This sequence belongs to the conotoxin T superfamily. Post-translationally, contains 2 disulfide bonds that can be either 'C1-C3, C2-C4' or 'C1-C4, C2-C3', since these disulfide connectivities have been observed for conotoxins with cysteine framework V (for examples, see AC P0DQQ7 and AC P81755). In terms of tissue distribution, expressed by the venom duct.

The protein localises to the secreted. The polypeptide is Conotoxin Vn5.3 (Conus ventricosus (Mediterranean cone)).